The primary structure comprises 586 residues: Alpha-1,2-mannosyltransferase MNN5 (586 aa).

An N-terminal signal peptide occupies residues 1 to 29 (MLIRLKKRKILQVIVSAVVLILFFCSVHN). N-linked (GlcNAc...) asparagine glycosylation is found at Asn-113, Asn-136, Asn-259, and Asn-264.

Belongs to the MNN1/MNT family. Interacts with SVP26. Post-translationally, glycosylated.

It is found in the golgi apparatus. It localises to the cis-Golgi network. It participates in protein modification; protein glycosylation. Functionally, responsible for addition of first and second mannose residues to the outer chain of core N-linked polysaccharides and to O-linked mannotriose. Implicated in late Golgi modifications. The protein is Alpha-1,2-mannosyltransferase MNN5 (MNN5) of Saccharomyces cerevisiae (strain ATCC 204508 / S288c) (Baker's yeast).